Reading from the N-terminus, the 663-residue chain is UvrABC system protein B (663 aa).

Residues 26-414 (DGLESGLAKQ…DNVAEQVVRP (389 aa)) enclose the Helicase ATP-binding domain. Residue 39–46 (GVTGSGKT) coordinates ATP. The Beta-hairpin signature appears at 92-115 (YYDYYQPEAYVPASDTFIEKDASI). A Helicase C-terminal domain is found at 430–596 (QVDDLMSEIR…GINKSVEDIL (167 aa)). Positions 624 to 659 (VKQINALEKQMYSHAQNMEFELAAKIRDEYLLLKEQ) constitute a UVR domain.

Belongs to the UvrB family. As to quaternary structure, forms a heterotetramer with UvrA during the search for lesions. Interacts with UvrC in an incision complex.

The protein resides in the cytoplasm. Its function is as follows. The UvrABC repair system catalyzes the recognition and processing of DNA lesions. A damage recognition complex composed of 2 UvrA and 2 UvrB subunits scans DNA for abnormalities. Upon binding of the UvrA(2)B(2) complex to a putative damaged site, the DNA wraps around one UvrB monomer. DNA wrap is dependent on ATP binding by UvrB and probably causes local melting of the DNA helix, facilitating insertion of UvrB beta-hairpin between the DNA strands. Then UvrB probes one DNA strand for the presence of a lesion. If a lesion is found the UvrA subunits dissociate and the UvrB-DNA preincision complex is formed. This complex is subsequently bound by UvrC and the second UvrB is released. If no lesion is found, the DNA wraps around the other UvrB subunit that will check the other stand for damage. The chain is UvrABC system protein B from Legionella pneumophila subsp. pneumophila (strain Philadelphia 1 / ATCC 33152 / DSM 7513).